Reading from the N-terminus, the 68-residue chain is Copper transport protein ATOX1 (68 aa).

The 63-residue stretch at 1–63 (MPKHEFSVDM…TLNKTGKAVS (63 aa)) folds into the HMA domain. Cu cation is bound by residues cysteine 12 and cysteine 15. Serine 47 carries the post-translational modification Phosphoserine. Lysine 60 carries the post-translational modification N6-acetyllysine.

This sequence belongs to the ATX1 family. As to quaternary structure, homodimer. Interacts with ATP7B. Interacts with ATP7A. Interacts (via dimer form) with SLC31A1 (via C-terminal domain); this interaction improves ATOX1 stability and controls intracellular Cu(I) levels.

Binds and deliver cytosolic copper to the copper ATPase proteins. May be important in cellular antioxidant defense. In Mus musculus (Mouse), this protein is Copper transport protein ATOX1.